The primary structure comprises 179 residues: MAPTSVNKIAVELSLQTDLTGSAMASSGVEELLTNPWQGWCQRWLEYLADCLPPASSYELTLLFTGDRRIQELNRKFRHQDKPTDVLAFAALEGDFPLIESEETEEPLYLGDIVISLERADHQARERGHSAKLEVVWLTAHGLLHLLGWDHPDEASLTTMLSEQSHLLTLIGQNPPLFT.

Residues histidine 141, histidine 145, and histidine 151 each coordinate Zn(2+).

The protein belongs to the endoribonuclease YbeY family. It depends on Zn(2+) as a cofactor.

It is found in the cytoplasm. Single strand-specific metallo-endoribonuclease involved in late-stage 70S ribosome quality control and in maturation of the 3' terminus of the 16S rRNA. This chain is Endoribonuclease YbeY, found in Synechocystis sp. (strain ATCC 27184 / PCC 6803 / Kazusa).